A 136-amino-acid chain; its full sequence is FK506-binding protein 2 (136 aa).

The signal sequence occupies residues 1–17 (MLSQIWILFTFMVCVIA). One can recognise a PPIase FKBP-type domain in the interval 45–134 (GDMVSVHYTG…DFDVELVDIA (90 aa)).

Belongs to the FKBP-type PPIase family. FKBP2 subfamily.

It is found in the endoplasmic reticulum. It carries out the reaction [protein]-peptidylproline (omega=180) = [protein]-peptidylproline (omega=0). Inhibited by both FK506 and rapamycin. In terms of biological role, PPIases accelerate the folding of proteins. It catalyzes the cis-trans isomerization of proline imidic peptide bonds in oligopeptides. The protein is FK506-binding protein 2 (FPR2) of Candida glabrata (strain ATCC 2001 / BCRC 20586 / JCM 3761 / NBRC 0622 / NRRL Y-65 / CBS 138) (Yeast).